Here is a 140-residue protein sequence, read N- to C-terminus: DegV domain-containing 15.5 kDa protein (140 aa).

One can recognise a DegV domain in the interval 4–140 (QIIVTDSTSD…ELVLLQSKKI (137 aa)). Residues threonine 61 and serine 93 each contribute to the hexadecanoate site.

In terms of biological role, may bind long-chain fatty acids, such as palmitate, and may play a role in lipid transport or fatty acid metabolism. This Staphylococcus aureus protein is DegV domain-containing 15.5 kDa protein.